Here is a 244-residue protein sequence, read N- to C-terminus: Nonsense-mediated decay protein 4 (244 aa).

It is found in the cytoplasm. Its function is as follows. Involved in nonsense-mediated decay of mRNAs containing premature stop codons. The chain is Nonsense-mediated decay protein 4 (NMD4) from Kluyveromyces lactis (strain ATCC 8585 / CBS 2359 / DSM 70799 / NBRC 1267 / NRRL Y-1140 / WM37) (Yeast).